Consider the following 542-residue polypeptide: Membrane protein insertase YidC (542 aa).

The helical transmembrane segment at 5-25 (TLLAVILSITVFYVFSLLFAP) threads the bilayer. Residues 33 to 64 (ESTGQAVSAPVSAGQPVAGGVQPSASAPSLPA) are disordered. Over residues 54–64 (QPSASAPSLPA) the composition is skewed to low complexity. 5 consecutive transmembrane segments (helical) span residues 323 to 343 (LDLG…KYFY), 345 to 365 (YVGN…ALFF), 419 to 439 (LPML…MFSI), 463 to 483 (MLGL…TMFI), and 500 to 520 (MLAL…GLVL).

The protein belongs to the OXA1/ALB3/YidC family. Type 1 subfamily. In terms of assembly, interacts with the Sec translocase complex via SecD. Specifically interacts with transmembrane segments of nascent integral membrane proteins during membrane integration.

It localises to the cell inner membrane. In terms of biological role, required for the insertion and/or proper folding and/or complex formation of integral membrane proteins into the membrane. Involved in integration of membrane proteins that insert both dependently and independently of the Sec translocase complex, as well as at least some lipoproteins. Aids folding of multispanning membrane proteins. This chain is Membrane protein insertase YidC, found in Pelobacter propionicus (strain DSM 2379 / NBRC 103807 / OttBd1).